Consider the following 667-residue polypeptide: NADPH--cytochrome P450 reductase (667 aa).

At 1 to 8 the chain is on the lumenal side; that stretch reads MEILESID. Residues 9 to 29 traverse the membrane as a helical segment; sequence FIEVLILDNLGAIIIVAVIVG. The Cytoplasmic segment spans residues 30-667; the sequence is TYLYMNKPPP…HGRYLQDVWF (638 aa). The 144-residue stretch at 72–215 folds into the Flavodoxin-like domain; it reads MKIFFGTQTR…DFNRWKKDMW (144 aa). Residues 164-173 and aspartate 199 each bind FMN; that span reads LGNKTYEHYN. The 235-residue stretch at 277–511 folds into the FAD-binding FR-type domain; the sequence is KNPYYAEVLE…FVRESHFKLP (235 aa). Residue arginine 297 coordinates NADP(+). FAD contacts are provided by residues 468–470 and 484–487; these read TSV and GVAS. Residues threonine 527, 586-587, and 592-596 contribute to the NADP(+) site; these read SR and KVYVQ. Tryptophan 666 lines the FAD pocket.

The protein belongs to the NADPH--cytochrome P450 reductase family. In the N-terminal section; belongs to the flavodoxin family. It in the C-terminal section; belongs to the flavoprotein pyridine nucleotide cytochrome reductase family. It depends on FAD as a cofactor. Requires FMN as cofactor.

The protein localises to the endoplasmic reticulum membrane. The enzyme catalyses 2 oxidized [cytochrome P450] + NADPH = 2 reduced [cytochrome P450] + NADP(+) + H(+). Its function is as follows. This enzyme is required for electron transfer from NADP to cytochrome P450 in microsomes. It can also provide electron transfer to heme oxygenase and cytochrome B5. The protein is NADPH--cytochrome P450 reductase (redB) of Dictyostelium discoideum (Social amoeba).